A 276-amino-acid chain; its full sequence is NH(3)-dependent NAD(+) synthetase (276 aa).

Residue 43-50 coordinates ATP; sequence GISGGVDS. Asp-49 provides a ligand contact to Mg(2+). A deamido-NAD(+)-binding site is contributed by Arg-146. Thr-166 serves as a coordination point for ATP. Residue Glu-171 participates in Mg(2+) binding. The deamido-NAD(+) site is built by Lys-179 and Asp-186. Positions 195 and 217 each coordinate ATP. 266 to 267 contacts deamido-NAD(+); it reads HK.

This sequence belongs to the NAD synthetase family. In terms of assembly, homodimer.

It carries out the reaction deamido-NAD(+) + NH4(+) + ATP = AMP + diphosphate + NAD(+) + H(+). Its pathway is cofactor biosynthesis; NAD(+) biosynthesis; NAD(+) from deamido-NAD(+) (ammonia route): step 1/1. Its function is as follows. Catalyzes the ATP-dependent amidation of deamido-NAD to form NAD. Uses ammonia as a nitrogen source. This is NH(3)-dependent NAD(+) synthetase from Vibrio vulnificus (strain CMCP6).